The chain runs to 82 residues: Cytochrome c-551 (82 aa).

Positions 12, 15, 16, and 61 each coordinate heme c.

In terms of processing, binds 1 heme c group covalently per subunit.

This is a prokaryotic monoheme cytochrome, unreactive with mitochondrial cytochrome C oxidase or reductase. It functions in nitrite and nitrate respiration in Pseudomonas, but it is also found in other bacteria. The polypeptide is Cytochrome c-551 (Ectopseudomonas mendocina (Pseudomonas mendocina)).